The sequence spans 122 residues: Large ribosomal subunit protein uL14 (122 aa).

Belongs to the universal ribosomal protein uL14 family. Part of the 50S ribosomal subunit. Forms a cluster with proteins L3 and L19. In the 70S ribosome, L14 and L19 interact and together make contacts with the 16S rRNA in bridges B5 and B8.

In terms of biological role, binds to 23S rRNA. Forms part of two intersubunit bridges in the 70S ribosome. The sequence is that of Large ribosomal subunit protein uL14 from Sulfurihydrogenibium sp. (strain YO3AOP1).